A 474-amino-acid chain; its full sequence is MKLSMPRFDQAPVLVVGDVMLDRYWHGATSRISPEAPVPVVRVEQHEDRPGGAANVALNIAALGAQALLVGVTGRDEAADSLANSLKAAGVDARFQRIDSQPTIVKLRVMSRHQQLLRVDFEEPFRTDAAALAVDVESLLAKVKVLVLSDYGKGALQNHQVLIQAARARNIPVLADPKGKDFAIYRGASLITPNLSEFETIVGRCADEAELVAKGQALMSELDLGALLVTRGEHGMTLLRHGQPALHLPARAREVFDVTGAGDTVISTLAAALAAGEELPSAVGLANLAAGIVVGKLGTAAISAPELRRAVQREQGSERGVLGLEQLLLAIEDARAHGEKIVFTNGCFDILHAGHVTYLEQARAQGDRLIVGVNDDASVTRLKGVGRPINSVDRRMAVLAGLGAVDWVVSFAEDTPERLLEQVRPDVLVKGGDYGVEQVVGAQIVKAYGGEVRVLGLVENSSTTAIVEKIRQKG.

Residues 1-318 (MKLSMPRFDQ…RAVQREQGSE (318 aa)) are ribokinase. 194–197 (NLSE) lines the ATP pocket. D263 is an active-site residue. The interval 343 to 474 (FTNGCFDILH…AIVEKIRQKG (132 aa)) is cytidylyltransferase.

It in the N-terminal section; belongs to the carbohydrate kinase PfkB family. In the C-terminal section; belongs to the cytidylyltransferase family. As to quaternary structure, homodimer.

It catalyses the reaction D-glycero-beta-D-manno-heptose 7-phosphate + ATP = D-glycero-beta-D-manno-heptose 1,7-bisphosphate + ADP + H(+). The enzyme catalyses D-glycero-beta-D-manno-heptose 1-phosphate + ATP + H(+) = ADP-D-glycero-beta-D-manno-heptose + diphosphate. It functions in the pathway nucleotide-sugar biosynthesis; ADP-L-glycero-beta-D-manno-heptose biosynthesis; ADP-L-glycero-beta-D-manno-heptose from D-glycero-beta-D-manno-heptose 7-phosphate: step 1/4. It participates in nucleotide-sugar biosynthesis; ADP-L-glycero-beta-D-manno-heptose biosynthesis; ADP-L-glycero-beta-D-manno-heptose from D-glycero-beta-D-manno-heptose 7-phosphate: step 3/4. Its pathway is bacterial outer membrane biogenesis; LPS core biosynthesis. Catalyzes the phosphorylation of D-glycero-D-manno-heptose 7-phosphate at the C-1 position to selectively form D-glycero-beta-D-manno-heptose-1,7-bisphosphate. Its function is as follows. Catalyzes the ADP transfer from ATP to D-glycero-beta-D-manno-heptose 1-phosphate, yielding ADP-D-glycero-beta-D-manno-heptose. This chain is Bifunctional protein HldE, found in Pseudomonas aeruginosa (strain ATCC 15692 / DSM 22644 / CIP 104116 / JCM 14847 / LMG 12228 / 1C / PRS 101 / PAO1).